The primary structure comprises 256 residues: Ribonuclease 3 (256 aa).

The RNase III domain maps to 6–128 (LATLETRLDH…LFGAVFLDAG (123 aa)). Glu-41 serves as a coordination point for Mg(2+). Residue Asp-45 is part of the active site. Mg(2+) contacts are provided by Asp-114 and Glu-117. Glu-117 is an active-site residue. A DRBM domain is found at 155-225 (DAKTLLQEFL…AKVALEAAQA (71 aa)).

Belongs to the ribonuclease III family. As to quaternary structure, homodimer. Mg(2+) serves as cofactor.

It is found in the cytoplasm. It catalyses the reaction Endonucleolytic cleavage to 5'-phosphomonoester.. Digests double-stranded RNA. Involved in the processing of primary rRNA transcript to yield the immediate precursors to the large and small rRNAs (23S and 16S). Processes some mRNAs, and tRNAs when they are encoded in the rRNA operon. Processes pre-crRNA and tracrRNA of type II CRISPR loci if present in the organism. This Bordetella bronchiseptica (strain ATCC BAA-588 / NCTC 13252 / RB50) (Alcaligenes bronchisepticus) protein is Ribonuclease 3.